Reading from the N-terminus, the 523-residue chain is Transmembrane protein 266 (523 aa).

Residues 1–94 (MTNPQPAIEG…VFLLSASLNS (94 aa)) are Cytoplasmic-facing. A helical transmembrane segment spans residues 95-115 (FLVACVILVVILLTLELLIDI). Residues 116–121 (KLLQFS) are Extracellular-facing. The chain crosses the membrane as a helical span at residues 122-142 (SAFQFAGVIHWISLVILSVFF). Residues 143-161 (SETVLRIVVLGIWDYIENK) lie on the Cytoplasmic side of the membrane. The chain crosses the membrane as a helical span at residues 162 to 182 (IEVFDGAVIILSLAPMVASTV). Topologically, residues 183–191 (ANGPRSPWD) are extracellular. Residues 192 to 212 (AISLIIMLRIWRVKRVIDAYV) form a helical membrane-spanning segment. Residues 213 to 523 (LPVKLEMEMV…EQKLHRVPEA (311 aa)) lie on the Cytoplasmic side of the membrane. Positions 218-270 (EMEMVIQQYEKAKVIQDEQLERLTQICQEQGFEIRQLRAHLAQQDLDLAAERE) form a coiled coil. The disordered stretch occupies residues 380–477 (SASRSSVTRA…PELEHRVSLF (98 aa)). Low complexity predominate over residues 382 to 397 (SRSSVTRAQSDSSQTL). Polar residues predominate over residues 398-411 (GSSMDCSTAREEPS). Over residues 421–430 (LPSQQQVEEA) the composition is skewed to pro residues.

Homodimer; disulfide-linked. Mainly expressed in the cerebellum. Also expressed in cerebral cortex, skeletal muscle and thyroid, but at much lower levels.

The protein resides in the cell membrane. Its subcellular location is the cell projection. It localises to the dendrite. It is found in the perikaryon. Functionally, voltage-sensor protein present on the post-synaptic side of glutamatergic mossy fibers and granule cells in the cerebellum. Despite the presence of a voltage-sensor segment, does not form a functional ion channel and its precise role remains unclear. Undergoes both rapid and slow structural rearrangements in response to changes in voltage. Contains a zinc-binding site that can regulate the slow conformational transition. In Homo sapiens (Human), this protein is Transmembrane protein 266.